A 421-amino-acid polypeptide reads, in one-letter code: MIDPVLLREHPDVLRRSQEARGDSVQLVDEALQVDIERRAAITAFEELRAEQNAFGKRVAQAPKQEKKELVAQAQQLAGRVKEAQQVAAAAEARFESVLRKIGNPVVAGVPSGGEDDYAVLKEVGGIPAFGFEPRDHLALGELLGAIDMARGAKVSGARFSFLRGLGARLEIALMNLALDKALANGFVPLITPTLVKPEVMQGTGFLGEHSDEVYHLETDDLYLTGTSEVALAGYHADEILDVTEPLRYAGWSTCYRREAGSAGKDTRGIIRVHQFTKLEMFVYTLPEHAEAEHARLLAWQEEMMQALGLSYRVIDTAAGDLGSSAARKYDVEAWIPTQGRYRELTSTSNCGTFQARRLETRYRTESGKTAPVATLNGTLATTRWIVAILETHQREDGSVLVPETLRPYLGGLEILEPIGK.

227–229 (TSE) is a binding site for L-serine. Residues 257–259 (RRE) and Val273 contribute to the ATP site. Position 280 (Glu280) interacts with L-serine. ATP is bound at residue 344–347 (ELTS). Thr379 is an L-serine binding site.

The protein belongs to the class-II aminoacyl-tRNA synthetase family. Type-1 seryl-tRNA synthetase subfamily. Homodimer. The tRNA molecule binds across the dimer.

Its subcellular location is the cytoplasm. It carries out the reaction tRNA(Ser) + L-serine + ATP = L-seryl-tRNA(Ser) + AMP + diphosphate + H(+). The catalysed reaction is tRNA(Sec) + L-serine + ATP = L-seryl-tRNA(Sec) + AMP + diphosphate + H(+). Its pathway is aminoacyl-tRNA biosynthesis; selenocysteinyl-tRNA(Sec) biosynthesis; L-seryl-tRNA(Sec) from L-serine and tRNA(Sec): step 1/1. In terms of biological role, catalyzes the attachment of serine to tRNA(Ser). Is also able to aminoacylate tRNA(Sec) with serine, to form the misacylated tRNA L-seryl-tRNA(Sec), which will be further converted into selenocysteinyl-tRNA(Sec). The polypeptide is Serine--tRNA ligase (Leifsonia xyli subsp. xyli (strain CTCB07)).